A 183-amino-acid polypeptide reads, in one-letter code: Histone deacetylase complex subunit SAP30L (183 aa).

Methionine 1 is modified (N-acetylmethionine). Residues 1 to 10 (MNGFSTEEDS) are compositionally biased toward acidic residues. A disordered region spans residues 1-23 (MNGFSTEEDSREGPPAAPAAAAP). Intrachain disulfides connect cysteine 29–cysteine 30 and cysteine 38–cysteine 74. An Atypical zinc finger spans residues 29-77 (CCLIEDGERCVRPAGNASFSKRVQKSISQKKLKLDIDKSVRHLYICDFH). Lysine 49 is covalently cross-linked (Glycyl lysine isopeptide (Lys-Gly) (interchain with G-Cter in SUMO2)). Residues 85 to 105 (RNKRKRKTSDDGGDSPEHDTD) are disordered. A Nuclear localization signal (NLS) motif is present at residues 86–91 (NKRKRK). Residues 88 to 90 (RKR) are important for DNA and phosphoinositide binding. Threonine 92 is subject to Phosphothreonine. Serine 93 and serine 99 each carry phosphoserine. Phosphothreonine is present on threonine 104. Residues lysine 155, lysine 166, and lysine 175 each participate in a glycyl lysine isopeptide (Lys-Gly) (interchain with G-Cter in SUMO2) cross-link.

The protein belongs to the SAP30 family. As to quaternary structure, interacts with components of the histone deacetylase complex SIN3A, HDAC1 and HDAC2. Binds histones and nucleosomes. Interacts with FEZ1. As to expression, detected in brain and ovary, and at lower levels in heart, small intestine, lung, kidney, skeletal muscle, stomach and spleen (at protein level). Ubiquitous; expressed in all tissues tested with highest levels in testis.

It is found in the nucleus. Its subcellular location is the nucleolus. Functions as a transcription repressor, probably via its interaction with histone deacetylase complexes. Involved in the functional recruitment of the class 1 Sin3-histone deacetylase complex (HDAC) to the nucleolus. Binds DNA, apparently without sequence-specificity, and bends bound double-stranded DNA. Binds phosphoinositol phosphates (phosphoinositol 3-phosphate, phosphoinositol 4-phosphate and phosphoinositol 5-phosphate) via the same basic sequence motif that mediates DNA binding and nuclear import. Functionally, functions as a transcription repressor; isoform 2 has lower transcription repressor activity than isoform 1 and isoform 3. In terms of biological role, functions as a transcription repressor; its activity is marginally lower than that of isoform 1. In Homo sapiens (Human), this protein is Histone deacetylase complex subunit SAP30L (SAP30L).